The following is a 331-amino-acid chain: Tetraacyldisaccharide 4'-kinase (331 aa).

59 to 66 (FVGGTGKT) provides a ligand contact to ATP.

This sequence belongs to the LpxK family.

It carries out the reaction a lipid A disaccharide + ATP = a lipid IVA + ADP + H(+). It participates in glycolipid biosynthesis; lipid IV(A) biosynthesis; lipid IV(A) from (3R)-3-hydroxytetradecanoyl-[acyl-carrier-protein] and UDP-N-acetyl-alpha-D-glucosamine: step 6/6. Transfers the gamma-phosphate of ATP to the 4'-position of a tetraacyldisaccharide 1-phosphate intermediate (termed DS-1-P) to form tetraacyldisaccharide 1,4'-bis-phosphate (lipid IVA). This chain is Tetraacyldisaccharide 4'-kinase, found in Alkalilimnicola ehrlichii (strain ATCC BAA-1101 / DSM 17681 / MLHE-1).